Consider the following 425-residue polypeptide: Serine hydroxymethyltransferase (425 aa).

(6S)-5,6,7,8-tetrahydrofolate contacts are provided by residues Leu124 and 128 to 130; that span reads GHL. Lys233 is modified (N6-(pyridoxal phosphate)lysine).

This sequence belongs to the SHMT family. In terms of assembly, homodimer. The cofactor is pyridoxal 5'-phosphate.

Its subcellular location is the cytoplasm. It catalyses the reaction (6R)-5,10-methylene-5,6,7,8-tetrahydrofolate + glycine + H2O = (6S)-5,6,7,8-tetrahydrofolate + L-serine. It functions in the pathway one-carbon metabolism; tetrahydrofolate interconversion. It participates in amino-acid biosynthesis; glycine biosynthesis; glycine from L-serine: step 1/1. Its function is as follows. Catalyzes the reversible interconversion of serine and glycine with tetrahydrofolate (THF) serving as the one-carbon carrier. This reaction serves as the major source of one-carbon groups required for the biosynthesis of purines, thymidylate, methionine, and other important biomolecules. Also exhibits THF-independent aldolase activity toward beta-hydroxyamino acids, producing glycine and aldehydes, via a retro-aldol mechanism. The chain is Serine hydroxymethyltransferase from Clavibacter michiganensis subsp. michiganensis (strain NCPPB 382).